A 764-amino-acid chain; its full sequence is Irregular chiasm C-roughest protein (764 aa).

A signal peptide spans 1 to 19 (MLHTMQLLLLATIVGMVRS). Over 20 to 533 (SPYTSYQNQR…QAKKSVSLLM (514 aa)) the chain is Extracellular. Ig-like C2-type domains lie at 21 to 120 (PYTS…PAIR), 132 to 230 (PEAP…AKIR), 237 to 343 (PKVK…LDIS), 346 to 419 (PSFR…AEIS), and 430 to 530 (PAIG…KSVS). Cystine bridges form between cysteine 49–cysteine 107, cysteine 155–cysteine 214, cysteine 281–cysteine 325, cysteine 367–cysteine 408, and cysteine 450–cysteine 508. N-linked (GlcNAc...) asparagine glycosylation is found at asparagine 211, asparagine 313, asparagine 393, asparagine 400, and asparagine 507. The chain crosses the membrane as a helical span at residues 534–556 (TIVGGISVVAFLLVLTILVVVYI). At 557-764 (KCKKRTKLPP…SSLLPPPTAV (208 aa)) the chain is on the cytoplasmic side. Disordered regions lie at residues 640–660 (HQNQ…HHTQ) and 691–719 (NGLP…STTA). The span at 692 to 701 (GLPSLQSTTA) shows a compositional bias: polar residues. The segment covering 702–719 (SVVSSSPNGSCSNQSTTA) has biased composition (low complexity).

As to expression, postembryonic expression is strong in the developing optic lobe and in the eye imaginal disk.

The protein localises to the membrane. Required for correct axonal pathway formation in the optic lobe and for programmed cell death in the developing retina. This chain is Irregular chiasm C-roughest protein (rst), found in Drosophila melanogaster (Fruit fly).